Reading from the N-terminus, the 315-residue chain is Methionyl-tRNA formyltransferase (315 aa).

Position 110–113 (110–113) interacts with (6S)-5,6,7,8-tetrahydrofolate; that stretch reads SLLP.

This sequence belongs to the Fmt family.

It carries out the reaction L-methionyl-tRNA(fMet) + (6R)-10-formyltetrahydrofolate = N-formyl-L-methionyl-tRNA(fMet) + (6S)-5,6,7,8-tetrahydrofolate + H(+). Its function is as follows. Attaches a formyl group to the free amino group of methionyl-tRNA(fMet). The formyl group appears to play a dual role in the initiator identity of N-formylmethionyl-tRNA by promoting its recognition by IF2 and preventing the misappropriation of this tRNA by the elongation apparatus. This chain is Methionyl-tRNA formyltransferase, found in Mycolicibacterium paratuberculosis (strain ATCC BAA-968 / K-10) (Mycobacterium paratuberculosis).